Reading from the N-terminus, the 481-residue chain is MKVALISYEVYPFAKVGGLADVVGALPKYLEKASVKPIVIMPKHKVVEKNARNLDKVMEKISIPYLKTDETFDIYKTIVPKTNVPIYFVANEYYFSAENVYEGPDLAEQAIYFSAAVLETLKVLDLQMDVLHVNDWQTSLIPVYLKTLYKEDEFYAKTVTLLTIHNLGYQGIFDSKYMEFSGLPNYLYNIDGIEFYGKINFLKGGILYSDIINTVSPTYANEIQTKEYGEKLDGVLRLRSADLYGVLNGIDYDEYNPETDKRIFVNYSLDNIDKKYENKVRLQKELGLPEDRRIPMIGMITRLVDQKGLDILSEVLRYIVNYDIQFVILGTGDEKYEEMFKKAQQEFPKNVSANVKFDINLAQKIYAASDMFLMPSRYEPCGLGQMYSLRYGTIPIVRYTGGLADTVLEYDENKMTGNGFGFVEYDSSKLLKAVARALDFYKNKKVHWKKLIDNAMKTDLSWERSAKEYVKLYNKAMSKRI.

Residue lysine 15 coordinates ADP-alpha-D-glucose.

This sequence belongs to the glycosyltransferase 1 family. Bacterial/plant glycogen synthase subfamily.

The enzyme catalyses [(1-&gt;4)-alpha-D-glucosyl](n) + ADP-alpha-D-glucose = [(1-&gt;4)-alpha-D-glucosyl](n+1) + ADP + H(+). It functions in the pathway glycan biosynthesis; glycogen biosynthesis. Functionally, synthesizes alpha-1,4-glucan chains using ADP-glucose. The sequence is that of Glycogen synthase from Thermosipho melanesiensis (strain DSM 12029 / CIP 104789 / BI429).